Reading from the N-terminus, the 406-residue chain is MSQKGSVKKAVLAYSGGLDTSIIVRWLIEEYGCEVIAFAADVGQGKELDGIPEKARQTGASKCYVEDLREEFVRDFVFPMFRANAIYEGRYFLGTSIARPLISKKQMEIALAEEAEAVCHGATGKGNDQIRFELAYYHFNPEIKIIAPWREWDLNSRESLIAYANKHGIPVPVTKKRPWSSDRNLLHISFEGGVLEDPWAEPPEDMYLLSVSPEQAPDKPEYVEIEFRNGDPVSINGESLSPAQLLAHLNELGGKHGIGRADIMENRFVGMKSRGVYETPGGTILEEAHRGVEQITMDREVLNLRDSLIPRYATMVYNGFWFAPEREAMQAMIDETQKTVNGVARVKLYKGHCRVVGRKSETNSLFDPEVATFEADEVYNQADAEGFIRLNALRLRIRSAMQKKHG.

ATP-binding positions include 13–21 and Ala40; that span reads AYSGGLDTS. L-citrulline contacts are provided by Tyr91 and Ser96. Gly121 is a binding site for ATP. 3 residues coordinate L-aspartate: Thr123, Asn127, and Asp128. Position 127 (Asn127) interacts with L-citrulline. L-citrulline contacts are provided by Arg131, Ser180, Ser189, Glu265, and Tyr277.

It belongs to the argininosuccinate synthase family. Type 1 subfamily. In terms of assembly, homotetramer.

It localises to the cytoplasm. It catalyses the reaction L-citrulline + L-aspartate + ATP = 2-(N(omega)-L-arginino)succinate + AMP + diphosphate + H(+). It participates in amino-acid biosynthesis; L-arginine biosynthesis; L-arginine from L-ornithine and carbamoyl phosphate: step 2/3. The chain is Argininosuccinate synthase from Syntrophotalea carbinolica (strain DSM 2380 / NBRC 103641 / GraBd1) (Pelobacter carbinolicus).